A 438-amino-acid polypeptide reads, in one-letter code: GTPase Der (438 aa).

2 EngA-type G domains span residues 4–168 (PIVA…KNEG) and 177–352 (IKIA…DNYC). Residues 10-17 (GRPNVGKS), 57-61 (DTGGI), 120-123 (NKID), 183-190 (GKPNVGKS), 230-234 (DTAGV), and 295-298 (NKWD) contribute to the GTP site. The 85-residue stretch at 353–437 (KQIKTGILND…GIKLEFRERK (85 aa)) folds into the KH-like domain.

Belongs to the TRAFAC class TrmE-Era-EngA-EngB-Septin-like GTPase superfamily. EngA (Der) GTPase family. In terms of assembly, associates with the 50S ribosomal subunit.

Functionally, GTPase that plays an essential role in the late steps of ribosome biogenesis. This chain is GTPase Der, found in Clostridium kluyveri (strain NBRC 12016).